The primary structure comprises 276 residues: Checkpoint protein HUS1B (276 aa).

Belongs to the HUS1 family. As to quaternary structure, interacts with RAD1 and RAD9B.

The sequence is that of Checkpoint protein HUS1B (Hus1b) from Mus musculus (Mouse).